The sequence spans 160 residues: Cyanate hydratase (160 aa).

Catalysis depends on residues Arg100, Glu103, and Ser126.

This sequence belongs to the cyanase family.

It carries out the reaction cyanate + hydrogencarbonate + 3 H(+) = NH4(+) + 2 CO2. Catalyzes the reaction of cyanate with bicarbonate to produce ammonia and carbon dioxide. In Arthroderma otae (strain ATCC MYA-4605 / CBS 113480) (Microsporum canis), this protein is Cyanate hydratase.